We begin with the raw amino-acid sequence, 251 residues long: Putative cysteine-rich repeat secretory protein 36 (251 aa).

The N-terminal stretch at 1 to 28 is a signal peptide; sequence MHSSYSLSKCLVCFTILAIQTLIRRVSS. Gnk2-homologous domains are found at residues 35–139 and 144–248; these read YLNH…NSPP and YENT…LYPF.

This sequence belongs to the cysteine-rich repeat secretory protein family.

It localises to the secreted. This chain is Putative cysteine-rich repeat secretory protein 36 (CRRSP36), found in Arabidopsis thaliana (Mouse-ear cress).